A 283-amino-acid chain; its full sequence is Formamidopyrimidine-DNA glycosylase (283 aa).

P2 functions as the Schiff-base intermediate with DNA in the catalytic mechanism. E3 serves as the catalytic Proton donor. K58 functions as the Proton donor; for beta-elimination activity in the catalytic mechanism. Residues H100, R119, and K162 each contribute to the DNA site. The FPG-type zinc-finger motif lies at 247–283 (RVYGREGQRCQTPDCAEKILRKVQSGRSSFYCPACQR). R273 serves as the catalytic Proton donor; for delta-elimination activity.

The protein belongs to the FPG family. As to quaternary structure, monomer. Zn(2+) serves as cofactor.

It carries out the reaction Hydrolysis of DNA containing ring-opened 7-methylguanine residues, releasing 2,6-diamino-4-hydroxy-5-(N-methyl)formamidopyrimidine.. The enzyme catalyses 2'-deoxyribonucleotide-(2'-deoxyribose 5'-phosphate)-2'-deoxyribonucleotide-DNA = a 3'-end 2'-deoxyribonucleotide-(2,3-dehydro-2,3-deoxyribose 5'-phosphate)-DNA + a 5'-end 5'-phospho-2'-deoxyribonucleoside-DNA + H(+). Functionally, involved in base excision repair of DNA damaged by oxidation or by mutagenic agents. Acts as a DNA glycosylase that recognizes and removes damaged bases. Has a preference for oxidized purines, such as 7,8-dihydro-8-oxoguanine (8-oxoG). Has AP (apurinic/apyrimidinic) lyase activity and introduces nicks in the DNA strand. Cleaves the DNA backbone by beta-delta elimination to generate a single-strand break at the site of the removed base with both 3'- and 5'-phosphates. This chain is Formamidopyrimidine-DNA glycosylase, found in Jannaschia sp. (strain CCS1).